The following is a 161-amino-acid chain: Transcription antitermination protein NusB (161 aa).

The segment at 1-22 is disordered; the sequence is MNLSDFKPGEGTEVPEEEKSVS.

It belongs to the NusB family.

In terms of biological role, involved in transcription antitermination. Required for transcription of ribosomal RNA (rRNA) genes. Binds specifically to the boxA antiterminator sequence of the ribosomal RNA (rrn) operons. The polypeptide is Transcription antitermination protein NusB (Hydrogenovibrio crunogenus (strain DSM 25203 / XCL-2) (Thiomicrospira crunogena)).